Reading from the N-terminus, the 71-residue chain is ATP synthase subunit c 1 (71 aa).

Helical transmembrane passes span 4 to 24 (FIGAGLATIGLGGAGIGVGHV) and 46 to 66 (LFVGIAFAEALGIFSFLIALL).

It belongs to the ATPase C chain family. F-type ATPases have 2 components, F(1) - the catalytic core - and F(0) - the membrane proton channel. F(1) has five subunits: alpha(3), beta(3), gamma(1), delta(1), epsilon(1). F(0) has four main subunits: a(1), b(1), b'(1) and c(10-14). The alpha and beta chains form an alternating ring which encloses part of the gamma chain. F(1) is attached to F(0) by a central stalk formed by the gamma and epsilon chains, while a peripheral stalk is formed by the delta, b and b' chains.

It is found in the cell inner membrane. F(1)F(0) ATP synthase produces ATP from ADP in the presence of a proton or sodium gradient. F-type ATPases consist of two structural domains, F(1) containing the extramembraneous catalytic core and F(0) containing the membrane proton channel, linked together by a central stalk and a peripheral stalk. During catalysis, ATP synthesis in the catalytic domain of F(1) is coupled via a rotary mechanism of the central stalk subunits to proton translocation. In terms of biological role, key component of the F(0) channel; it plays a direct role in translocation across the membrane. A homomeric c-ring of between 10-14 subunits forms the central stalk rotor element with the F(1) delta and epsilon subunits. The protein is ATP synthase subunit c 1 of Cereibacter sphaeroides (strain ATCC 17029 / ATH 2.4.9) (Rhodobacter sphaeroides).